The sequence spans 361 residues: Porphobilinogen deaminase (361 aa).

N-acetylserine is present on S2. S69 bears the Phosphoserine mark. An N6-acetyllysine modification is found at K74. The residue at position 147 (S147) is a Phosphoserine. C261 carries the S-(dipyrrolylmethanemethyl)cysteine modification.

Belongs to the HMBS family. As to quaternary structure, monomer. Dipyrromethane serves as cofactor.

It localises to the cytoplasm. The protein localises to the cytosol. It carries out the reaction 4 porphobilinogen + H2O = hydroxymethylbilane + 4 NH4(+). Its pathway is porphyrin-containing compound metabolism; protoporphyrin-IX biosynthesis; coproporphyrinogen-III from 5-aminolevulinate: step 2/4. As part of the heme biosynthetic pathway, catalyzes the sequential polymerization of four molecules of porphobilinogen to form hydroxymethylbilane, also known as preuroporphyrinogen. Catalysis begins with the assembly of the dipyrromethane cofactor by the apoenzyme from two molecules of porphobilinogen or from preuroporphyrinogen. The covalently linked cofactor acts as a primer, around which the tetrapyrrole product is assembled. In the last step of catalysis, the product, preuroporphyrinogen, is released, leaving the cofactor bound to the holodeaminase intact. This Bos taurus (Bovine) protein is Porphobilinogen deaminase (HMBS).